The chain runs to 535 residues: Lecithin-cholesterol acyltransferase-like 4 (535 aa).

Residue Ser-2 is modified to N-acetylserine. Residue Ser-182 is the Acyl-ester intermediate of the active site. Catalysis depends on charge relay system residues Asp-391 and His-416. Positions 488–505 (STVNSISVSQPGDDQNPQ) are enriched in polar residues. Positions 488–507 (STVNSISVSQPGDDQNPQAE) are disordered.

The protein belongs to the AB hydrolase superfamily. Lipase family.

This Arabidopsis thaliana (Mouse-ear cress) protein is Lecithin-cholesterol acyltransferase-like 4 (LCAT4).